The chain runs to 859 residues: Transforming growth factor-beta receptor-associated protein 1 (859 aa).

In terms of domain architecture, CNH spans R24 to V297. Residues K563–P727 form a CHCR repeat.

Belongs to the TRAP1 family. As to quaternary structure, interacts with TGFBR2 and ACVR2B; in the absence of ligand stimulation. Interacts with TGFBR1, ACVRL1, BMPR1A and ACVR1B; in the absence of ligand stimulation and to a less extent. Interacts with SMAD4; the interaction seems to be mutually exclusive with the interaction of SMAD4 and phosphorylated SMAD2. May interact with ALOX5. Interacts with RAB5C. Interacts with VPS8, VPS11 and VPS16. Component of the putative class C core vacuole/endosome tethering (CORVET) complex; the core of which composed of the class C Vps proteins VPS11, VPS16, VPS18 and VPS33A, is associated with VPS8 and TGFBRAP1.

Its subcellular location is the cytoplasm. It is found in the early endosome. Functionally, plays a role in the TGF-beta/activin signaling pathway. It associates with inactive heteromeric TGF-beta and activin receptor complexes, mainly through the type II receptor, and is released upon activation of signaling. May recruit SMAD4 to the vicinity of the receptor complex and facilitate its interaction with receptor-regulated Smads, such as SMAD2. Its function is as follows. Plays a role in vesicle-mediated protein trafficking of the endocytic membrane transport pathway. Believed to act as a component of the putative CORVET endosomal tethering complexes which is proposed to be involved in the Rab5-to-Rab7 endosome conversion probably implicating MON1A/B, and via binding SNAREs and SNARE complexes to mediate tethering and docking events during SNARE-mediated membrane fusion. The CORVET complex is proposed to function as a Rab5 effector to mediate early endosome fusion probably in specific endosome subpopulations. Functions predominantly in APPL1-containing endosomes and in degradative but not recycling trafficking of endocytosed cargo. The sequence is that of Transforming growth factor-beta receptor-associated protein 1 (TGFBRAP1) from Bos taurus (Bovine).